We begin with the raw amino-acid sequence, 488 residues long: MEVSLTTSIALATIVFFLYKLLTRPTSSKNRLPEPWRLPIIGHMHHLIGTMPHRGVMDLARKYGSLMHLQLGEVSAIVVSSPKWAKEILTTYDIPFANRPETLTGEIIAYHNTDIVLAPYGEYWRQLRKLCTLELLSVKKVKSFQSLREEECWNLVQEIKASGSGTPFNLSEGIFKVIATVLSRAAFGKGIKDQKQFTEIVKEILRETGGFDVADIFPSKKFLHHLSGKRGRLTSIHNKLDSLINNLVAEHTVSKSSKVNETLLDVLLRLKNSEEFPLTADNVKAIILDMFGAGTDTSSATVEWAISELIRCPRAMEKVQAELRQALNGKERIKEEEIQDLPYLNLVIRETLRLHPPLPLVMPRECRQAMNLAGYDVANKTKLIVNVFAINRDPEYWKDAESFNPERFENSNTTIMGADYEYLPFGAGRRMCPGSALGLANVQLPLANILYYFKWKLPNGASHDQLDMTESFGATVQRKTELMLVPSF.

Over 1–6 the chain is Cytoplasmic; that stretch reads MEVSLT. The helical; Signal-anchor for type II membrane protein transmembrane segment at 7 to 23 threads the bilayer; sequence TSIALATIVFFLYKLLT. The Lumenal portion of the chain corresponds to 24–488; the sequence is RPTSSKNRLP…KTELMLVPSF (465 aa). N-linked (GlcNAc...) asparagine glycans are attached at residues N169, N260, N379, and N412. C432 serves as a coordination point for heme.

It belongs to the cytochrome P450 family. Heme serves as cofactor. As to expression, expressed in leaf primordia.

It is found in the endoplasmic reticulum membrane. The catalysed reaction is (+)-(R)-germacrene A + 3 reduced [NADPH--hemoprotein reductase] + 3 O2 = germacra-1(10),4,11(13)-trien-12-oate + 3 oxidized [NADPH--hemoprotein reductase] + 4 H2O + 4 H(+). It participates in secondary metabolite biosynthesis; terpenoid biosynthesis. In terms of biological role, involved in the biosynthesis of germacrene-derived sesquiterpene lactones. Catalyzes three consecutive oxidations of germacrene A to produce germacrene A acid. Could also catalyze the three-step oxidation of non-natural substrate amorphadiene to artemisinic acid. The chain is Germacrene A hydroxylase from Helianthus annuus (Common sunflower).